The following is a 749-amino-acid chain: Catalase-peroxidase 2 (749 aa).

The signal sequence occupies residues 1–27 (MFKRTIPLFAAFTLAISPSVFPNYAYA). Residues 107 to 229 (WHAAGTYRIY…LAATVMGLIY (123 aa)) constitute a cross-link (tryptophyl-tyrosyl-methioninium (Trp-Tyr) (with M-255)). His-108 (proton acceptor) is an active-site residue. Positions 229-255 (YVNPEGPNGVPDPLAAAEKIRETFGRM) form a cross-link, tryptophyl-tyrosyl-methioninium (Tyr-Met) (with W-107). Position 270 (His-270) interacts with heme b.

This sequence belongs to the peroxidase family. Peroxidase/catalase subfamily. As to quaternary structure, homodimer or homotetramer. Requires heme b as cofactor. Formation of the three residue Trp-Tyr-Met cross-link is important for the catalase, but not the peroxidase activity of the enzyme.

It carries out the reaction H2O2 + AH2 = A + 2 H2O. The enzyme catalyses 2 H2O2 = O2 + 2 H2O. In terms of biological role, bifunctional enzyme with both catalase and broad-spectrum peroxidase activity. This chain is Catalase-peroxidase 2, found in Legionella pneumophila (strain Paris).